A 353-amino-acid chain; its full sequence is Phosphoribosylformylglycinamidine cyclo-ligase (353 aa).

This sequence belongs to the AIR synthase family.

Its subcellular location is the cytoplasm. It catalyses the reaction 2-formamido-N(1)-(5-O-phospho-beta-D-ribosyl)acetamidine + ATP = 5-amino-1-(5-phospho-beta-D-ribosyl)imidazole + ADP + phosphate + H(+). It functions in the pathway purine metabolism; IMP biosynthesis via de novo pathway; 5-amino-1-(5-phospho-D-ribosyl)imidazole from N(2)-formyl-N(1)-(5-phospho-D-ribosyl)glycinamide: step 2/2. The protein is Phosphoribosylformylglycinamidine cyclo-ligase of Magnetococcus marinus (strain ATCC BAA-1437 / JCM 17883 / MC-1).